A 138-amino-acid chain; its full sequence is Small ribosomal subunit protein uS11c (138 aa).

Residues 1–22 are disordered; the sequence is MAKAIPKISSRRNGRIGSRKGA. Residues 9–22 are compositionally biased toward basic residues; the sequence is SSRRNGRIGSRKGA.

The protein belongs to the universal ribosomal protein uS11 family. In terms of assembly, part of the 30S ribosomal subunit.

It localises to the plastid. It is found in the chloroplast. The protein is Small ribosomal subunit protein uS11c of Nicotiana tomentosiformis (Tobacco).